The sequence spans 136 residues: MSQLVYFSSSSENTQRFIERLGLPAVRIPLNERKQIQVDEPYILIVPSYGGGGTAGAVPRQVIRFLNDEHNRALLRGVIASGNRNFGEAYGRAGDVIARKCGVPWLYRFELMGTQSDIENVRKGVTEFWQRQPQNA.

This sequence belongs to the NrdI family.

Probably involved in ribonucleotide reductase function. This chain is Protein NrdI, found in Shigella dysenteriae serotype 1 (strain Sd197).